The sequence spans 138 residues: uncharacterized protein (138 aa).

Residues 1–27 (MEGELIENNGLDIYDTSETPKKRGRPA) are disordered.

This is an uncharacterized protein from Escherichia coli (strain K12).